Consider the following 787-residue polypeptide: Phenylalanine--tRNA ligase beta subunit (787 aa).

The region spanning 39-149 is the tRNA-binding domain; sequence APAFSGVVVA…EDAPVGTNIR (111 aa). Residues 400–475 form the B5 domain; the sequence is PEAKQVGLRL…RVYGYENIPD (76 aa). Mg(2+) contacts are provided by Asp-453, Asp-459, Glu-462, and Glu-463. The region spanning 694–786 is the FDX-ACB domain; the sequence is SKFQPVRRDL…VATEAGARLR (93 aa).

It belongs to the phenylalanyl-tRNA synthetase beta subunit family. Type 1 subfamily. Tetramer of two alpha and two beta subunits. It depends on Mg(2+) as a cofactor.

The protein localises to the cytoplasm. The enzyme catalyses tRNA(Phe) + L-phenylalanine + ATP = L-phenylalanyl-tRNA(Phe) + AMP + diphosphate + H(+). The protein is Phenylalanine--tRNA ligase beta subunit of Neisseria gonorrhoeae (strain ATCC 700825 / FA 1090).